Here is a 236-residue protein sequence, read N- to C-terminus: Proteasome subunit beta type-1 (236 aa).

This sequence belongs to the peptidase T1B family. As to quaternary structure, the 26S proteasome consists of a 20S proteasome core and two 19S regulatory subunits. The 20S proteasome core is composed of 28 subunits that are arranged in four stacked rings, resulting in a barrel-shaped structure. The two end rings are each formed by seven alpha subunits, and the two central rings are each formed by seven beta subunits. The catalytic chamber with the active sites is on the inside of the barrel.

It is found in the cytoplasm. Its subcellular location is the nucleus. Non-catalytic component of the proteasome, a multicatalytic proteinase complex which is characterized by its ability to cleave peptides with Arg, Phe, Tyr, Leu, and Glu adjacent to the leaving group at neutral or slightly basic pH. The proteasome has an ATP-dependent proteolytic activity. The protein is Proteasome subunit beta type-1 (psmB1) of Dictyostelium discoideum (Social amoeba).